Here is a 269-residue protein sequence, read N- to C-terminus: Transmembrane protein 41B (269 aa).

6 helical membrane passes run 30–50 (TSLL…FLVY), 87–107 (FYVQ…TFAI), 125–147 (LALF…LSYL), 175–195 (LINY…FINI), 203–223 (PLKV…FVAI), and 240–260 (SWNS…PALF). Positions 118-229 (GFLYPFPLAL…FVAIKAGTTL (112 aa)) are VTT domain; required for its function in autophagy.

Belongs to the TMEM41 family.

The protein resides in the endoplasmic reticulum membrane. It is found in the endomembrane system. It catalyses the reaction a 1,2-diacyl-sn-glycero-3-phospho-L-serine(in) = a 1,2-diacyl-sn-glycero-3-phospho-L-serine(out). The enzyme catalyses cholesterol(in) = cholesterol(out). The catalysed reaction is a 1,2-diacyl-sn-glycero-3-phosphocholine(in) = a 1,2-diacyl-sn-glycero-3-phosphocholine(out). It carries out the reaction a 1,2-diacyl-sn-glycero-3-phosphoethanolamine(in) = a 1,2-diacyl-sn-glycero-3-phosphoethanolamine(out). Functionally, phospholipid scramblase involved in lipid homeostasis and membrane dynamics processes. Has phospholipid scramblase activity toward cholesterol and phosphatidylserine, as well as phosphatidylethanolamine and phosphatidylcholine. Required for autophagosome formation: participates in early stages of autophagosome biogenesis at the endoplasmic reticulum (ER) membrane by reequilibrating the leaflets of the ER as lipids are extracted by ATG2 (ATG2A or ATG2B) to mediate autophagosome assembly. In addition to autophagy, involved in other processes in which phospholipid scramblase activity is required. Required for normal motor neuron development. The sequence is that of Transmembrane protein 41B from Gallus gallus (Chicken).